Here is a 728-residue protein sequence, read N- to C-terminus: MTSITPVTLANCEDEPIHVPGAIQPHGALVTLRADGMVLAASENIQALLGFVASPGSYLTQEQVGPEVLRMLEEGLTGNGPWSNSVETRIGEHLFDVIGHSYKEVFYLEFEIRTADTLSITSFTLNAQRIIAQVQLHNDTASLLSNVTDELRRMTGYDRVMAYRFRHDDSGEVVAESRREDLESYLGQRYPASDIPAQARRLYIQNPIRLIADVAYTPMRVFPALNPETNESFDLSYSVLRSVSPIHCEYLTNMGVRASMSISIVVGGKLWGLFSCHHMSPKLIPYPVRMSFQIFSQVCSAIVERLEQGRIAELLRVSTERRLALARRARDADDLFGALAHPDDGIAALIPCDGALVMLGGRTLSIRGDFERQAGNVLQRLQRDPERDIYHTDNWPQPSEDSPDGGDCCGVLAIRFHRQESGWIFWFRHEEVHRIRWGGKPEKLLTIGPSGPRLTPRGSFEAWEEVVRGHSTPWSETDLAIAEKLRLDLMELCLNHAAEVDRMRQRLIAVLGHDLRNPLQSISMAAALLSSSDTRTTELRQHISASSSRMERLVSQILDMSRLQSGIGLTVNPVDTDVSQLVRQIVCETDVAYPGLVIEIAIDPQVRAVVDPDRYAQVAANLLSNARHHGLPGRPVLVTLTRQGDEVCLSVLNETSGLSEAQLANLFEPFKRESADNQRNRNGLGIGLYISQAIAQAHQGRIDVDCRDDVITFCLRLPVRQAETGSSS.

Residue Cys-12 coordinates a tetrapyrrole. The segment at 17 to 495 (IHVPGAIQPH…RLDLMELCLN (479 aa)) is chromophore binding domain. The GAF domain maps to 139–303 (DTASLLSNVT…IFSQVCSAIV (165 aa)). One can recognise a Histidine kinase domain in the interval 510–721 (VLGHDLRNPL…TFCLRLPVRQ (212 aa)). A Phosphohistidine; by autocatalysis modification is found at His-513.

The protein in the N-terminal section; belongs to the phytochrome family. Contains one covalently linked tetrapyrrole chromophore.

It carries out the reaction ATP + protein L-histidine = ADP + protein N-phospho-L-histidine.. Its function is as follows. Photoreceptor which exists in two forms that are reversibly interconvertible by light: the R form that absorbs maximally in the red region of the spectrum and the FR form that absorbs maximally in the far-red region. This Pseudomonas aeruginosa (strain ATCC 15692 / DSM 22644 / CIP 104116 / JCM 14847 / LMG 12228 / 1C / PRS 101 / PAO1) protein is Bacteriophytochrome (bphP).